A 213-amino-acid polypeptide reads, in one-letter code: Thymidylate kinase (213 aa).

Residue 10 to 17 participates in ATP binding; that stretch reads GIDGCGKT.

This sequence belongs to the thymidylate kinase family.

It catalyses the reaction dTMP + ATP = dTDP + ADP. Phosphorylation of dTMP to form dTDP in both de novo and salvage pathways of dTTP synthesis. This is Thymidylate kinase from Synechococcus sp. (strain WH7803).